Here is a 79-residue protein sequence, read N- to C-terminus: MHARDWFLVFIAIFIPPLAVWLKRGFFTKDLLINFLLFLLGFFPGLIHALYVISCHPYEENEARYSHLSSSDDNYGSLA.

Residues 1–6 (MHARDW) are Cytoplasmic-facing. Residues 7 to 27 (FLVFIAIFIPPLAVWLKRGFF) form a helical membrane-spanning segment. Over 28 to 32 (TKDLL) the chain is Vesicular. The chain crosses the membrane as a helical span at residues 33-53 (INFLLFLLGFFPGLIHALYVI). The Cytoplasmic portion of the chain corresponds to 54–79 (SCHPYEENEARYSHLSSSDDNYGSLA). Phosphoserine occurs at positions 71 and 77.

This sequence belongs to the UPF0057 (PMP3) family.

The protein resides in the membrane. It is found in the lipid droplet. The chain is Protein SNA2 (SNA2) from Saccharomyces cerevisiae (strain ATCC 204508 / S288c) (Baker's yeast).